Reading from the N-terminus, the 286-residue chain is MTRKSILVTGASSGLGYAAVQKLAENGFYVFAAVREIRGMFSNIKNIKELKLDLANEQSIEELFIYIEATQKDYPLWGLVNNAGICVPSPLELLREFDLRQQLDTNVIGQLLVTQFALPFIRKSKGRIINITSGLGSIAVPYLGAYSIAQFAKMAFTDVLRRELKHSGVTVSVVQPGAIYTPIWDKFLVTGQEILDNSLDEKRKIYERSFIEFLKASQIGVNSVKTTRNDFAKVILDIFKAEIPETHYYVGDDAKNFSNKSKILTVTEIDEWFDLQSPTESEFKKI.

Tyr-146 functions as the Proton acceptor in the catalytic mechanism.

The protein belongs to the short-chain dehydrogenases/reductases (SDR) family.

The enzyme catalyses 3-amino-5,6,7,7a-tetrahydro-1H-pyrrolizin-1-one + AH2 = 3-amino-tetrahydro-1H-pyrrolizin-1-ol + A. Involved in the biosynthetic pathway of pyrrolizwilline, a pyrrolizidine alkaloid. Catalyzes the reduction of 3-amino-tetrahydro-pyrrolizinone to 3-amino-tetrahydro-pyrrolizinol. The sequence is that of 3-amino-tetrahydro-pyrrolizinone reductase (xhpD) from Xenorhabdus hominickii.